The primary structure comprises 318 residues: Pseudouridine-5'-phosphate glycosidase 1 (318 aa).

E29 acts as the Proton donor in catalysis. Residues K90 and V110 each contribute to the substrate site. D142 contributes to the Mn(2+) binding site. 144–146 contributes to the substrate binding site; the sequence is SAD. K163 functions as the Nucleophile in the catalytic mechanism.

Belongs to the pseudouridine-5'-phosphate glycosidase family. As to quaternary structure, homotrimer. It depends on Mn(2+) as a cofactor.

The catalysed reaction is D-ribose 5-phosphate + uracil = psi-UMP + H2O. In terms of biological role, catalyzes the reversible cleavage of pseudouridine 5'-phosphate (PsiMP) to ribose 5-phosphate and uracil. Functions biologically in the cleavage direction, as part of a pseudouridine degradation pathway. The chain is Pseudouridine-5'-phosphate glycosidase 1 from Photorhabdus laumondii subsp. laumondii (strain DSM 15139 / CIP 105565 / TT01) (Photorhabdus luminescens subsp. laumondii).